The sequence spans 214 residues: Ribonuclease HII (214 aa).

In terms of domain architecture, RNase H type-2 spans 26-214 (EIVCGVDEAG…PVREAFDLIR (189 aa)). A divalent metal cation is bound by residues Asp32, Glu33, and Asp124.

It belongs to the RNase HII family. The cofactor is Mn(2+). Mg(2+) is required as a cofactor.

It is found in the cytoplasm. It catalyses the reaction Endonucleolytic cleavage to 5'-phosphomonoester.. Functionally, endonuclease that specifically degrades the RNA of RNA-DNA hybrids. The protein is Ribonuclease HII of Burkholderia pseudomallei (strain 668).